Consider the following 526-residue polypeptide: Peptide chain release factor 3 (526 aa).

Positions 8-277 (NKRRTFAIIS…GLTQWAPAPQ (270 aa)) constitute a tr-type G domain. GTP contacts are provided by residues 17 to 24 (SHPDAGKT), 85 to 89 (DTPGH), and 139 to 142 (NKLD).

It belongs to the TRAFAC class translation factor GTPase superfamily. Classic translation factor GTPase family. PrfC subfamily.

The protein resides in the cytoplasm. Its function is as follows. Increases the formation of ribosomal termination complexes and stimulates activities of RF-1 and RF-2. It binds guanine nucleotides and has strong preference for UGA stop codons. It may interact directly with the ribosome. The stimulation of RF-1 and RF-2 is significantly reduced by GTP and GDP, but not by GMP. The protein is Peptide chain release factor 3 of Histophilus somni (strain 129Pt) (Haemophilus somnus).